The chain runs to 297 residues: Succinate dehydrogenase [ubiquinone] iron-sulfur subunit, mitochondrial (297 aa).

The segment at 33 to 55 (TAEALSASRPPIKETKTSTVKEP) is disordered. The region spanning 78-157 (DKPRMQSYTL…ETRIYPLPHT (80 aa)) is the 2Fe-2S ferredoxin-type domain. Cys-117, Cys-122, Cys-125, and Cys-137 together coordinate [2Fe-2S] cluster. A 4Fe-4S ferredoxin-type domain is found at 199-229 (DRKKLDGLYECILCACCSTSCPSYWWNSEEY). Residues Cys-209, Cys-212, and Cys-215 each contribute to the [4Fe-4S] cluster site. Cys-219 provides a ligand contact to [3Fe-4S] cluster. Trp-224 contacts a ubiquinone. [3Fe-4S] cluster is bound by residues Cys-266 and Cys-272. Cys-276 is a [4Fe-4S] cluster binding site.

The protein belongs to the succinate dehydrogenase/fumarate reductase iron-sulfur protein family. Component of complex II composed of four subunits: a flavoprotein (FP), an iron-sulfur protein (IP), and a cytochrome b composed of a large and a small subunit. Requires [2Fe-2S] cluster as cofactor. It depends on [3Fe-4S] cluster as a cofactor. [4Fe-4S] cluster is required as a cofactor.

The protein localises to the mitochondrion inner membrane. The catalysed reaction is a quinone + succinate = fumarate + a quinol. It functions in the pathway carbohydrate metabolism; tricarboxylic acid cycle; fumarate from succinate (eukaryal route): step 1/1. Its function is as follows. Iron-sulfur protein (IP) subunit of succinate dehydrogenase (SDH) that is involved in complex II of the mitochondrial electron transport chain and is responsible for transferring electrons from succinate to ubiquinone (coenzyme Q). The sequence is that of Succinate dehydrogenase [ubiquinone] iron-sulfur subunit, mitochondrial (SDH2) from Zymoseptoria tritici (Speckled leaf blotch fungus).